Reading from the N-terminus, the 551-residue chain is Solute carrier family 22 member 3 (551 aa).

A helical membrane pass occupies residues 21 to 41; that stretch reads VFLLLCLTGVTFAFLFVGVVF. N-linked (GlcNAc...) asparagine glycans are attached at residues N72, N99, and N114. Residues 177–197 traverse the membrane as a helical segment; that stretch reads LIVYLISCFGVGITGVVVAFA. An N-linked (GlcNAc...) asparagine glycan is attached at N199. A run of 2 helical transmembrane segments spans residues 236–256 and 264–284; these read IVGI…PGIA and GIQL…WVVP. The short motif at 284-288 is the Proline-rich sequence element; the sequence is PESPR. A glycan (N-linked (GlcNAc...) asparagine) is linked at N317. The next 3 helical transmembrane spans lie at 376-396, 463-483, and 493-513; these read MDFF…LLTI, FGVS…PFLL, and LPLI…MLLP.

Belongs to the major facilitator (TC 2.A.1) superfamily. Organic cation transporter (TC 2.A.1.19) family. As to expression, highly expressed in placenta. Expressed in intestine, hear, kidney and lung. Widely expressed in brain, particularly in hippocampus, cerebellum, cerebral cortex. In the brain, expressed predominantly in regions located at the brain-cerebrospinal fluid border, with expression extending to regions that belong to monoaminergic pathways such as raphe nuclei, striatum and thalamus. In brain, expressed in neurons and glial cells of amygdala. Expression is low in kidney and lung and undetectable in liver. Expressed in Sertoli cells in testis. Expressed in tracheal and bronchial epithelium of the respiratory tract, where it localizes to the apical membrane of ciliated and brush cells, and in basal cells.

The protein resides in the cell membrane. Its subcellular location is the apical cell membrane. The protein localises to the basolateral cell membrane. It is found in the mitochondrion membrane. It localises to the endomembrane system. The protein resides in the nucleus membrane. Its subcellular location is the nucleus outer membrane. The catalysed reaction is (R)-noradrenaline(out) = (R)-noradrenaline(in). It carries out the reaction (R)-adrenaline(out) = (R)-adrenaline(in). The enzyme catalyses serotonin(out) = serotonin(in). It catalyses the reaction dopamine(out) = dopamine(in). The catalysed reaction is histamine(out) = histamine(in). It carries out the reaction tyramine(in) = tyramine(out). The enzyme catalyses guanidine(out) = guanidine(in). It catalyses the reaction agmatine(out) = agmatine(in). The catalysed reaction is spermidine(in) = spermidine(out). It carries out the reaction L-histidyl-L-proline diketopiperazine(in) = L-histidyl-L-proline diketopiperazine(out). The enzyme catalyses (R)-salsolinol(in) = (R)-salsolinol(out). Functionally, electrogenic voltage-dependent transporter that mediates the transport of a variety of organic cations such as endogenous bioactive amines, cationic drugs and xenobiotics. Cation cellular uptake or release is driven by the electrochemical potential, i.e. membrane potential and concentration gradient. Functions as a Na(+)- and Cl(-)-independent, bidirectional uniporter. Implicated in neuronal monoamine neurotransmitters cellular uptake such as dopamine, adrenaline/epinephrine, noradrenaline/norepinephrine, histamine, serotonin and tyramine, thereby supporting a role in homeostatic regulation of aminergic neurotransmission in the brain. Transports dopaminergic neuromodulators cyclo(his-pro) and salsolinol with low efficiency. May be involved in the uptake and disposition of cationic compounds by renal clearance from the blood flow. May contribute to regulate the transport of cationic compounds in testis across the blood-testis-barrier. Mediates the transport of polyamine spermidine and putrescine. Mediates the bidirectional transport of polyamine agmatine. Also transports guanidine. May also mediate intracellular transport of organic cations, thereby playing a role in amine metabolism and intracellular signaling. In Rattus norvegicus (Rat), this protein is Solute carrier family 22 member 3.